Here is a 156-residue protein sequence, read N- to C-terminus: MFLTEDLITFNLRNFLLFQLWESSFSPGAGGFCTTLPPSFLRVDDRATSSTTDSSRAPSSPRPPGSTSHCGISTRCTERCLCVLPLRTSQVPDVMAPQHDQEKFHDLAYSCLGKSFSMSNQDLYGYSTSSLALGLAWLSWETKKKNVLHLVGLDSL.

A disordered region spans residues arginine 46–glycine 71. The span at threonine 48–serine 59 shows a compositional bias: low complexity.

As to expression, expressed throughout the brain in the thalamus, subthalamic nucleus, corpus callosum, hippocampus, substantia nigra, caudate nucleus, and amygdala.

It localises to the nucleus. May play a role in FOS signaling pathways involved in development and remodeling of neurons. Promotes transcription of the FOS promoter. In Homo sapiens (Human), this protein is Protein CROC-4.